The primary structure comprises 475 residues: MYEKLQPPSVGSKITFVAGKPVVPNDPIIPYIRGDGTGVDIWPATELVINAAIAKAYGGREEINWFKVYAGDEACELYGTYQIFPEDTLTAIKEYGVAIKGPLTTPVGGGIRSLNVALRQIFDLYTCVRPCRYYPGTPSPHKTPEKLDIIVYRENTEDIYLGIEWAEGTEGAKKLIAYLNDELIPTTPALGKKQIRLDSGIGIKPISKTGSQRLVRRAILHAKRLPKAKQMVTLVHKGNIMKFTEGPFRDWGYELATTEFRAECVTERESWICGNKESNPDLTIEANAHMIDPGYDTLTEEKQAVIKQEVEQVLNSIWESHGNGQWKEKVMVNDRIADSIFQQIQTRPDEYSILATMNLNGDYLSDAAAAVVGGLGMGPGANIGDSAAIFEATHGTAPKHAGLDRINPGSVILSGVMMLEFMGWQEAADLIKKGIGAAIANREVTYDLARLMEPKVDKPLKCSEFAQAIVSHFDD.

NADP(+) is bound at residue threonine 104. Positions 113, 115, 119, 129, and 153 each coordinate D-threo-isocitrate. A Mg(2+)-binding site is contributed by aspartate 362. Residues histidine 394–histidine 400, asparagine 407, tyrosine 446, and arginine 450 each bind NADP(+).

This sequence belongs to the isocitrate and isopropylmalate dehydrogenases family. Homodimer. Mg(2+) serves as cofactor. The cofactor is Mn(2+).

The protein resides in the cytoplasm. It catalyses the reaction D-threo-isocitrate + NADP(+) = 2-oxoglutarate + CO2 + NADPH. Its activity is regulated as follows. Inhibited non-competitively by ADP and 2-oxoglutarate, with respect to isocitrate and in a competitive manner by NADPH. Functionally, catalyzes the oxidative decarboxylation of isocitrate to 2-oxoglutarate and carbon dioxide with the concomitant reduction of NADP(+). Is specific for NADP(+), cannot use NAD(+). This Synechocystis sp. (strain ATCC 27184 / PCC 6803 / Kazusa) protein is Isocitrate dehydrogenase [NADP].